A 180-amino-acid polypeptide reads, in one-letter code: GTP cyclohydrolase 1 (180 aa).

Zn(2+)-binding residues include Cys-71, His-74, and Cys-142.

Belongs to the GTP cyclohydrolase I family. As to quaternary structure, homomer.

The enzyme catalyses GTP + H2O = 7,8-dihydroneopterin 3'-triphosphate + formate + H(+). It participates in cofactor biosynthesis; 7,8-dihydroneopterin triphosphate biosynthesis; 7,8-dihydroneopterin triphosphate from GTP: step 1/1. This Helicobacter pylori (strain P12) protein is GTP cyclohydrolase 1.